The chain runs to 477 residues: Probable periplasmic serine endoprotease DegP-like (477 aa).

Positions 1-27 (MSIPRLKSYLMMFAAVLMLGQVLTAQA) are cleaved as a signal peptide. Catalysis depends on charge relay system residues H117, D147, and S220. Substrate-binding positions include 218–220 (GNS) and 275–279 (LGVVI). 2 consecutive PDZ domains span residues 264 to 355 (LKKD…IRNG) and 361 to 466 (DISV…LRQG).

This sequence belongs to the peptidase S1C family.

It localises to the periplasm. The enzyme catalyses Acts on substrates that are at least partially unfolded. The cleavage site P1 residue is normally between a pair of hydrophobic residues, such as Val-|-Val.. Functionally, might be efficient in the degradation of transiently denatured and unfolded proteins which accumulate in the periplasm following stress conditions. This Pseudomonas putida (strain ATCC 700007 / DSM 6899 / JCM 31910 / BCRC 17059 / LMG 24140 / F1) protein is Probable periplasmic serine endoprotease DegP-like.